The following is a 414-amino-acid chain: Transcription factor FAMA (414 aa).

2 disordered regions span residues 1–61 (MDKD…TPFD) and 142–197 (KEDQ…SQRM). Low complexity-rich tracts occupy residues 12–24 (GESS…NSSG) and 35–49 (QQQQ…QQHQ). Residues 166–175 (RENKNVTKKE) are compositionally biased toward basic and acidic residues. Residues 176 to 185 (VKSKRKRART) are compositionally biased toward basic residues. The segment covering 187-197 (KTSEEVESQRM) has biased composition (basic and acidic residues). Residues 194-245 (SQRMTHIAVERNRRKQMNEHLRVLRSLMPGSYVQRGDQASIIGGAIEFVREL) form the bHLH domain. Positions 249 to 253 (LQCLE) match the LxCxE motif motif.

In terms of assembly, interacts with FAMA through its LxCxE motif. Self-interacts. Also interacts with bHLH071 and bHLH093. Interacts with RBR1. Resctricted to stomatal cell lineages (at protein level). Expressed in roots, leaves, stems, and flowers.

The protein resides in the nucleus. Functionally, transcription activator. Together with MYB88 and MYB124, ensures that stomata contain just two guard cells (GCs) by enforcing a single symmetric precursor cell division before stomatal maturity. Together with SPCH and MUTE, regulates the stomata formation. Required to promote differentiation and morphogenesis of stomatal guard cells and to halt proliferative divisions in their immediate precursors. Mediates the formation of stomata. Prevents histone H3K27me3 marks and derepresses stem cell gene expression. The sequence is that of Transcription factor FAMA (FAMA) from Arabidopsis thaliana (Mouse-ear cress).